The sequence spans 808 residues: MLMTKPPVPQLNLTVVREAAERAARAIPPLWPLESSVAVNPFLGQTGEPLAMAAARLRRVAGAAVTMPRTWYAERIASGELSDVDLAAAIDAAPPTTRPLTIAELKRAAQIEIAPPQALPTVAELASAVSGFDWTGFVAERISAWASGYFDRGQALWAAPKGPNAYAAWRLTATHDLTPEIFGLTGFAADVAAAPESADAALIRAVEQLGLSEAASESYFHRLLISLGGWAQLARYRLWQAELSGSTDTAVTDLIAIRAVWDSTLLRKYQPQIAAEWTDAINGYVQPLQPTEDDHINAILQDAVERAAQRKLQTVLAASAQPKPDDRPALQMAFCIDVRSEPFRRALESLDPRIRTLGFGGFFGLPIAHRRFASDVVEARLPVLLPPRVTTSCSGHTHAHEANDRAKRVAARAKRAWGRFKLAAISSFAFVESMGPVYVAKLLSDGLRSGTRRTNADPAPQFDPPLALGARVDTAEAVLRAMSLTGPFAPLVLIAGHGASVVNNPHASALHCGACGGFPGDVNARLLAGLLNDPQVRTALIGRDIAIPADTLFVGALHDTTTDAVTLYDADHPSPAHASALAQTRDWLATAGALTRSERALRLPRAATGGAIARRARDWAEVRPEWALAGCRAFIAAPRPHTSGRDLQGQAFLHDYDWRKDTDFSVLELILTAPVVVASWISLQYYGSTVAPETFGAGNKLLHNVTGGIGVVEGNGGLLRAGLPWQSVHDGERLVHQPLRLSVLIEAPHEAISTILDRYPEVRALFDNRWLHLFALDDDGRMNWRYVGDGGWEHADNPPTNQRVASFE.

Zn(2+) is bound by residues Cys335, Asp337, His497, and Cys512.

Belongs to the inorganic carbon transporter (TC 9.A.2) DabA family. In terms of assembly, forms a complex with DabB. It depends on Zn(2+) as a cofactor.

Its subcellular location is the cell inner membrane. Part of an energy-coupled inorganic carbon pump. The polypeptide is Probable inorganic carbon transporter subunit DabA (Rhodopseudomonas palustris (strain ATCC BAA-98 / CGA009)).